A 415-amino-acid polypeptide reads, in one-letter code: Beta-1,4-glucuronyltransferase 1 (415 aa).

Residues 1–8 (MQMSYAIR) are Cytoplasmic-facing. Residues 9 to 36 (CAFYQLLLAALMLVAMLQLLYLSLLSGL) traverse the membrane as a helical; Signal-anchor for type II membrane protein segment. Residues 37–415 (HGQEEQDQYF…AKYPDSPRHC (379 aa)) lie on the Lumenal side of the membrane. Residue Asn-204 is glycosylated (N-linked (GlcNAc...) asparagine). Residues Asp-227 and Asp-229 each coordinate Mn(2+). Asn-300 carries N-linked (GlcNAc...) asparagine glycosylation.

The protein belongs to the glycosyltransferase 49 family. In terms of assembly, interacts with LARGE1 and LARGE2. Requires Mn(2+) as cofactor.

It localises to the golgi apparatus membrane. It catalyses the reaction 3-O-[beta-D-Xyl-(1-&gt;4)-Rib-ol-P-Rib-ol-P-3-beta-D-GalNAc-(1-&gt;3)-beta-D-GlcNAc-(1-&gt;4)-(O-6-P-alpha-D-Man)]-Thr-[protein] + UDP-alpha-D-glucuronate = 3-O-[beta-D-GlcA-(1-&gt;3)-beta-D-Xyl-(1-&gt;4)-Rib-ol-P-Rib-ol-P-3-beta-D-GalNAc-(1-&gt;3)-beta-D-GlcNAc-(1-&gt;4)-(O-6-P-alpha-D-Man)]-Thr-[protein] + UDP + H(+). It functions in the pathway protein modification; protein glycosylation. Beta-1,4-glucuronyltransferase involved in O-mannosylation of alpha-dystroglycan (DAG1). Transfers a glucuronic acid (GlcA) residue onto a xylose (Xyl) acceptor to produce the glucuronyl-beta-1,4-xylose-beta disaccharide primer, which is further elongated by LARGE1, during synthesis of phosphorylated O-mannosyl glycan. Phosphorylated O-mannosyl glycan is a carbohydrate structure present in alpha-dystroglycan (DAG1), which is required for binding laminin G-like domain-containing extracellular proteins with high affinity. Required for axon guidance; via its function in O-mannosylation of alpha-dystroglycan (DAG1). In Bos taurus (Bovine), this protein is Beta-1,4-glucuronyltransferase 1.